Reading from the N-terminus, the 111-residue chain is T cell receptor beta variable 29-1 (111 aa).

A signal peptide spans 1–16 (MLSLLLLLLGLGSVFS). In terms of domain architecture, Ig-like spans 17-111 (AVISQKPSRD…DSSIYLCSVE (95 aa)). Cys38 and Cys108 form a disulfide bridge. N-linked (GlcNAc...) asparagine glycosylation is present at Asn87.

Alpha-beta TR is a heterodimer composed of an alpha and beta chain; disulfide-linked. The alpha-beta TR is associated with the transmembrane signaling CD3 coreceptor proteins to form the TR-CD3 (TcR or TCR). The assembly of alpha-beta TR heterodimers with CD3 occurs in the endoplasmic reticulum where a single alpha-beta TR heterodimer associates with one CD3D-CD3E heterodimer, one CD3G-CD3E heterodimer and one CD247 homodimer forming a stable octameric structure. CD3D-CD3E and CD3G-CD3E heterodimers preferentially associate with TR alpha and TR beta chains, respectively. The association of the CD247 homodimer is the last step of TcR assembly in the endoplasmic reticulum and is required for transport to the cell surface.

Its subcellular location is the cell membrane. In terms of biological role, v region of the variable domain of T cell receptor (TR) beta chain that participates in the antigen recognition. Alpha-beta T cell receptors are antigen specific receptors which are essential to the immune response and are present on the cell surface of T lymphocytes. Recognize peptide-major histocompatibility (MH) (pMH) complexes that are displayed by antigen presenting cells (APC), a prerequisite for efficient T cell adaptive immunity against pathogens. Binding of alpha-beta TR to pMH complex initiates TR-CD3 clustering on the cell surface and intracellular activation of LCK that phosphorylates the ITAM motifs of CD3G, CD3D, CD3E and CD247 enabling the recruitment of ZAP70. In turn ZAP70 phosphorylates LAT, which recruits numerous signaling molecules to form the LAT signalosome. The LAT signalosome propagates signal branching to three major signaling pathways, the calcium, the mitogen-activated protein kinase (MAPK) kinase and the nuclear factor NF-kappa-B (NF-kB) pathways, leading to the mobilization of transcription factors that are critical for gene expression and essential for T cell growth and differentiation. The T cell repertoire is generated in the thymus, by V-(D)-J rearrangement. This repertoire is then shaped by intrathymic selection events to generate a peripheral T cell pool of self-MH restricted, non-autoaggressive T cells. Post-thymic interaction of alpha-beta TR with the pMH complexes shapes TR structural and functional avidity. This Homo sapiens (Human) protein is T cell receptor beta variable 29-1.